The primary structure comprises 193 residues: uncharacterized protein (193 aa).

This is an uncharacterized protein from Aquifex aeolicus (strain VF5).